The following is a 90-amino-acid chain: LYR motif-containing protein 2 (90 aa).

The N-terminal 19 residues, 1–19 (MASSRLPASALTLKQFIQR), are a transit peptide targeting the mitochondrion.

Belongs to the complex I LYR family.

It localises to the mitochondrion. Involved in efficient integration of the N-module into mitochondrial respiratory chain complex I. This chain is LYR motif-containing protein 2 (lyrm2), found in Salmo salar (Atlantic salmon).